A 228-amino-acid chain; its full sequence is Max-interacting protein 1 (228 aa).

Disordered regions lie at residues 29 to 76 (GYAS…NELE) and 162 to 228 (GSTI…SFTS). Over residues 43 to 56 (QHSKPPRRLSRAQK) the composition is skewed to basic residues. Residues 57–70 (HSSGSSNTSTANRS) are compositionally biased toward polar residues. Residues 67 to 119 (ANRSTHNELEKNRRAHLRLCLERLKVLIPLGPDCTRHTTLGLLNKAKAHIKKL) form the bHLH domain. The span at 173–183 (EREEIEVDVES) shows a compositional bias: acidic residues. Residues 216 to 228 (GYSSASVKLSFTS) show a composition bias toward polar residues.

In terms of assembly, efficient DNA binding requires dimerization with another bHLH protein. Binds DNA as a heterodimer with MAX. Interacts with SMC3. Interacts with RNF17.

The protein resides in the nucleus. Functionally, transcriptional repressor. MXI1 binds with MAX to form a sequence-specific DNA-binding protein complex which recognizes the core sequence 5'-CAC[GA]TG-3'. MXI1 thus antagonizes MYC transcriptional activity by competing for MAX. The sequence is that of Max-interacting protein 1 (Mxi1) from Rattus norvegicus (Rat).